The chain runs to 454 residues: Bifunctional protein GlmU (454 aa).

The segment at 1–226 is pyrophosphorylase; it reads MSLEIVILAA…AMEVQGVNDR (226 aa). UDP-N-acetyl-alpha-D-glucosamine contacts are provided by residues 8–11, Lys-22, Gln-73, 78–79, 99–101, Gly-136, Glu-151, Asn-166, and Asn-224; these read LAAG, GT, and YGD. Asp-101 contacts Mg(2+). A Mg(2+)-binding site is contributed by Asn-224. The tract at residues 227–247 is linker; the sequence is MQQAQLERHYQRLRAEELMRQ. Residues 248–454 are N-acetyltransferase; it reads GVTLLDPQRL…NWKRPEKIKK (207 aa). 2 residues coordinate UDP-N-acetyl-alpha-D-glucosamine: Arg-330 and Lys-348. His-360 serves as the catalytic Proton acceptor. The UDP-N-acetyl-alpha-D-glucosamine site is built by Tyr-363 and Asn-374. Residues Ala-377, 383–384, Ser-402, Ala-420, and Arg-437 each bind acetyl-CoA; that span reads NY.

The protein in the N-terminal section; belongs to the N-acetylglucosamine-1-phosphate uridyltransferase family. In the C-terminal section; belongs to the transferase hexapeptide repeat family. As to quaternary structure, homotrimer. Mg(2+) is required as a cofactor.

The protein localises to the cytoplasm. The catalysed reaction is alpha-D-glucosamine 1-phosphate + acetyl-CoA = N-acetyl-alpha-D-glucosamine 1-phosphate + CoA + H(+). It carries out the reaction N-acetyl-alpha-D-glucosamine 1-phosphate + UTP + H(+) = UDP-N-acetyl-alpha-D-glucosamine + diphosphate. It functions in the pathway nucleotide-sugar biosynthesis; UDP-N-acetyl-alpha-D-glucosamine biosynthesis; N-acetyl-alpha-D-glucosamine 1-phosphate from alpha-D-glucosamine 6-phosphate (route II): step 2/2. It participates in nucleotide-sugar biosynthesis; UDP-N-acetyl-alpha-D-glucosamine biosynthesis; UDP-N-acetyl-alpha-D-glucosamine from N-acetyl-alpha-D-glucosamine 1-phosphate: step 1/1. The protein operates within bacterial outer membrane biogenesis; LPS lipid A biosynthesis. In terms of biological role, catalyzes the last two sequential reactions in the de novo biosynthetic pathway for UDP-N-acetylglucosamine (UDP-GlcNAc). The C-terminal domain catalyzes the transfer of acetyl group from acetyl coenzyme A to glucosamine-1-phosphate (GlcN-1-P) to produce N-acetylglucosamine-1-phosphate (GlcNAc-1-P), which is converted into UDP-GlcNAc by the transfer of uridine 5-monophosphate (from uridine 5-triphosphate), a reaction catalyzed by the N-terminal domain. The protein is Bifunctional protein GlmU of Pseudomonas aeruginosa (strain LESB58).